The sequence spans 67 residues: Small ribosomal subunit protein bS21 (67 aa).

It belongs to the bacterial ribosomal protein bS21 family.

The sequence is that of Small ribosomal subunit protein bS21 from Nitratidesulfovibrio vulgaris (strain DSM 19637 / Miyazaki F) (Desulfovibrio vulgaris).